Consider the following 1449-residue polypeptide: Spike glycoprotein (1449 aa).

An N-terminal signal peptide occupies residues 1–28; sequence MKKLFVVLVVMPLIYGDNFPCSKLTNRT. S1 regions lie at residues 17-776 and 29-776; these read DNFP…FYYY and IGNH…FYYY. Residues 29 to 1390 are Virion surface-facing; the sequence is IGNHWNLIET…NRIETYVKWP (1362 aa). Residues 657-801 form an interaction with host ANPEP region; that stretch reads VIYEEGDNIV…DSNDVDCEPV (145 aa). Positions 777 to 1449 are S2; it reads SIYNYTNDMT…YEPIEKVHIH (673 aa). The interval 1022–1043 is fusion peptide; sequence AGGITLGALGGGAVAIPFAVAV. Residues 1037–1156 are heptad repeat 1 (HR1); the sequence is IPFAVAVQAR…HVDRLITGRL (120 aa). 2 coiled-coil regions span residues 1104 to 1148 and 1338 to 1380; these read QDVV…DAHV and TYLN…LEWL. A heptad repeat 2 (HR2) region spans residues 1305 to 1402; sequence PDYIDINQTV…VWLLIGLVVI (98 aa). The helical transmembrane segment at 1391-1410 threads the bilayer; the sequence is WYVWLLIGLVVIFCIPLLLF. The Intravirion portion of the chain corresponds to 1411–1449; it reads CCCSTGCCGCIGCLGSCCHSICSRRQFENYEPIEKVHIH. The short motif at 1445 to 1449 is the KxHxx element; it reads KVHIH.

It belongs to the alphacoronaviruses spike protein family. In terms of assembly, homotrimer. During virus morphogenesis, found in a complex with M and HE proteins. Interacts with host ANPEP.

It is found in the virion membrane. Its subcellular location is the host endoplasmic reticulum-Golgi intermediate compartment membrane. Functionally, S1 region attaches the virion to the cell membrane by interacting with host ANPEP/aminopeptidase N, initiating the infection. Binding to the receptor probably induces conformational changes in the S glycoprotein unmasking the fusion peptide of S2 region and activating membranes fusion. S2 region belongs to the class I viral fusion protein. Under the current model, the protein has at least 3 conformational states: pre-fusion native state, pre-hairpin intermediate state, and post-fusion hairpin state. During viral and target cell membrane fusion, the coiled coil regions (heptad repeats) regions assume a trimer-of-hairpins structure, positioning the fusion peptide in close proximity to the C-terminal region of the ectodomain. The formation of this structure appears to drive apposition and subsequent fusion of viral and target cell membranes. The protein is Spike glycoprotein of Porcine transmissible gastroenteritis coronavirus (strain FS772/70) (TGEV).